The sequence spans 521 residues: Cyclic AMP-responsive element-binding protein 3-like protein 2 (521 aa).

Over 1–378 the chain is Cytoplasmic; that stretch reads MEVLESGEQS…CKLAGTQTGT (378 aa). The residue at position 93 (Ser-93) is a Phosphoserine. Residue Lys-178 forms a Glycyl lysine isopeptide (Lys-Gly) (interchain with G-Cter in SUMO2) linkage. Ser-191 bears the Phosphoserine mark. The tract at residues 196–264 is disordered; sequence SVDQLHLPPT…PHKLQGSGPL (69 aa). Residues 208-220 show a composition bias toward low complexity; that stretch reads SSHSSDSEGSLSP. Residues 294 to 357 enclose the bZIP domain; the sequence is ALKKIRRKIK…RTLLQQLQKL (64 aa). The segment at 296-325 is basic motif; sequence KKIRRKIKNKISAQESRRKKKEYMDSLEKK. The leucine-zipper stretch occupies residues 336-357; that stretch reads LRKKVEVLENTNRTLLQQLQKL. The helical; Signal-anchor for type II membrane protein transmembrane segment at 379 to 399 threads the bilayer; that stretch reads CLMVVVLCFAVAFGSLFQGYG. Residues 400–521 lie on the Lumenal side of the membrane; sequence LYPSATKMAL…ELERRVNATF (122 aa). An S1P recognition motif is present at residues 427–430; the sequence is RNLL. N-linked (GlcNAc...) asparagine glycans are attached at residues Asn-505 and Asn-518.

Belongs to the bZIP family. ATF subfamily. As to quaternary structure, binds DNA as a dimer. Post-translationally, upon ER stress, translocated to the Golgi apparatus, where it is processed by regulated intramembrane proteolysis (RIP) to release the cytosol-facing N-terminal transcription factor domain. The cleavage is performed sequentially by site-1 and site-2 proteases (S1P/MBTPS1 and S2P/MBTPS2). N-glycosylated. In terms of processing, ubiquitinated by HRD1/SYVN1; undergoes 'Lys-48'-linked ubiquitination, followed by rapid proteasomal degradation under normal conditions. Upon ER stress, SYVN1 E3 ubiquitin-protein ligase dissociates from its substrate, ubiquitination does not occur and CREB3L2 is stabilized.

The protein resides in the endoplasmic reticulum membrane. Its subcellular location is the nucleus. Transcription factor involved in unfolded protein response (UPR). In the absence of endoplasmic reticulum (ER) stress, inserted into ER membranes, with N-terminal DNA-binding and transcription activation domains oriented toward the cytosolic face of the membrane. In response to ER stress, transported to the Golgi, where it is cleaved in a site-specific manner by resident proteases S1P/MBTPS1 and S2P/MBTPS2. The released N-terminal cytosolic domain is translocated to the nucleus to effect transcription of specific target genes. Plays a critical role in chondrogenesis by activating the transcription of SEC23A, which promotes the transport and secretion of cartilage matrix proteins, and possibly that of ER biogenesis-related genes. In a neuroblastoma cell line, protects cells from ER stress-induced death. In vitro activates transcription of target genes via direct binding to the CRE site. The chain is Cyclic AMP-responsive element-binding protein 3-like protein 2 (Creb3l2) from Rattus norvegicus (Rat).